The primary structure comprises 372 residues: Spermidine/putrescine import ATP-binding protein PotA (372 aa).

The 231-residue stretch at 11–241 (IELRSITKSY…PANLFVARFI (231 aa)) folds into the ABC transporter domain. 43 to 50 (GPSGCGKT) contributes to the ATP binding site.

The protein belongs to the ABC transporter superfamily. Spermidine/putrescine importer (TC 3.A.1.11.1) family. As to quaternary structure, the complex is composed of two ATP-binding proteins (PotA), two transmembrane proteins (PotB and PotC) and a solute-binding protein (PotD).

It localises to the cell inner membrane. It carries out the reaction ATP + H2O + polyamine-[polyamine-binding protein]Side 1 = ADP + phosphate + polyamineSide 2 + [polyamine-binding protein]Side 1.. Part of the ABC transporter complex PotABCD involved in spermidine/putrescine import. Responsible for energy coupling to the transport system. The sequence is that of Spermidine/putrescine import ATP-binding protein PotA from Aggregatibacter actinomycetemcomitans (Actinobacillus actinomycetemcomitans).